The following is a 100-amino-acid chain: Transcription and mRNA export factor SUS1 (100 aa).

It belongs to the ENY2 family. In terms of assembly, component of the nuclear pore complex (NPC)-associated TREX-2 complex (transcription and export complex 2), composed of at least SUS1, SAC3, THP1, SEM1, and CDC31. TREX-2 contains 2 SUS1 chains. The TREX-2 complex interacts with the nucleoporin NUP1. Component of the 1.8 MDa SAGA transcription coactivator-HAT complex. SAGA is built of 5 distinct domains with specialized functions. Within the SAGA complex, SUS1, SGF11, SGF73 and UBP8 form an additional subcomplex of SAGA called the DUB module (deubiquitination module). Interacts directly with THP1, SAC3, SGF11, and with the RNA polymerase II.

It is found in the nucleus. The protein resides in the nucleoplasm. The protein localises to the cytoplasm. It localises to the P-body. Involved in mRNA export coupled transcription activation by association with both the TREX-2 and the SAGA complexes. At the promoters, SAGA is required for recruitment of the basal transcription machinery. It influences RNA polymerase II transcriptional activity through different activities such as TBP interaction and promoter selectivity, interaction with transcription activators, and chromatin modification through histone acetylation and deubiquitination. Within the SAGA complex, participates in a subcomplex required for deubiquitination of H2B and for the maintenance of steady-state H3 methylation levels. The TREX-2 complex functions in docking export-competent ribonucleoprotein particles (mRNPs) to the nuclear entrance of the nuclear pore complex (nuclear basket). TREX-2 participates in mRNA export and accurate chromatin positioning in the nucleus by tethering genes to the nuclear periphery. May also be involved in cytoplasmic mRNA decay by interaction with components of P-bodies. The chain is Transcription and mRNA export factor SUS1 from Candida glabrata (strain ATCC 2001 / BCRC 20586 / JCM 3761 / NBRC 0622 / NRRL Y-65 / CBS 138) (Yeast).